The chain runs to 495 residues: Sialin (495 aa).

The segment covering 1 to 18 has biased composition (basic and acidic residues); that stretch reads MRSPVRDLARNDGEESTD. The tract at residues 1 to 24 is disordered; that stretch reads MRSPVRDLARNDGEESTDRTPLLP. At 1-41 the chain is on the cytoplasmic side; the sequence is MRSPVRDLARNDGEESTDRTPLLPGAPRAEAAPVCCSARYN. A Phosphoserine modification is found at Ser-3. The Dileucine internalization motif signature appears at 22–23; sequence LL. A helical membrane pass occupies residues 42–62; the sequence is LAILAFFGFFIVYALRVNLSV. At 63-109 the chain is on the lumenal side; that stretch reads ALVDMVDSNTTLEDNRTSKACPEHSAPIKVHHNQTGKKYQWDAETQG. Asn-71, Asn-77, and Asn-95 each carry an N-linked (GlcNAc...) asparagine glycan. Residues 110 to 130 traverse the membrane as a helical segment; sequence WILGSFFYGYIITQIPGGYVA. The Cytoplasmic segment spans residues 131-136; it reads SKIGGK. A helical membrane pass occupies residues 137 to 157; sequence MLLGFGILGTAVLTLFTPIAA. Position 158 (Asp-158) is a topological domain, lumenal. The helical transmembrane segment at 159–179 threads the bilayer; that stretch reads LGVGPLIVLRALEGLGEGVTF. Residues 180-200 lie on the Cytoplasmic side of the membrane; the sequence is PAMHAMWSSWAPPLERSKLLS. A helical membrane pass occupies residues 201 to 221; it reads ISYAGAQLGTVISLPLSGIIC. Residues 222 to 227 are Lumenal-facing; sequence YYMNWT. A helical transmembrane segment spans residues 228-248; it reads YVFYFFGTIGIFWFLLWIWLV. The Cytoplasmic segment spans residues 249-279; sequence SDTPQKHKRISHYEKEYILSSLRNQLSSQKS. Residues 280–300 traverse the membrane as a helical segment; that stretch reads VPWVPILKSLPLWAIVVAHFS. At 301–328 the chain is on the lumenal side; the sequence is YNWTFYTLLTLLPTYMKEILRFNVQENG. The chain crosses the membrane as a helical span at residues 329–349; that stretch reads FLSSLPYLGSWLCMILSGQAA. The Cytoplasmic segment spans residues 350 to 365; that stretch reads DNLRAKWNFSTLCVRR. A helical transmembrane segment spans residues 366–386; sequence IFSLIGMIGPAVFLVAAGFIG. The Lumenal segment spans residues 387-391; that stretch reads CDYSL. A helical membrane pass occupies residues 392 to 412; that stretch reads AVAFLTISTTLGGFCSSGFSI. Residues 413–423 lie on the Cytoplasmic side of the membrane; that stretch reads NHLDIAPSYAG. Residues 424–444 traverse the membrane as a helical segment; the sequence is ILLGITNTFATIPGMVGPVIA. At 445-457 the chain is on the lumenal side; the sequence is KSLTPDNTVGEWQ. Residues 458–478 traverse the membrane as a helical segment; that stretch reads TVFYIAAAINVFGAIFFTLFA. Over 479 to 495 the chain is Cytoplasmic; it reads KGEVQNWALNDHHGHRH.

It belongs to the major facilitator superfamily. Sodium/anion cotransporter family. In the adult, detected in placenta, kidney and pancreas. Abundant in the endothelial cells of tumors from ovary, colon, breast and lung, but is not detected in endothelial cells from the corresponding normal tissues. Highly expressed in salivary glands and liver, with lower levels of expression in brain, spleen kidney, muscle and pancreas. Expressed in acinar cells of salivary glands (at protein level).

It is found in the basolateral cell membrane. The protein resides in the cytoplasmic vesicle. It localises to the secretory vesicle. Its subcellular location is the synaptic vesicle membrane. The protein localises to the lysosome membrane. It carries out the reaction N-acetylneuraminate(in) + H(+)(in) = N-acetylneuraminate(out) + H(+)(out). The catalysed reaction is D-glucuronate(out) + H(+)(out) = D-glucuronate(in) + H(+)(in). It catalyses the reaction 2 nitrate(out) + H(+)(out) = 2 nitrate(in) + H(+)(in). The enzyme catalyses L-aspartate(out) = L-aspartate(in). It carries out the reaction L-glutamate(out) = L-glutamate(in). The catalysed reaction is N-acetyl-L-aspartyl-L-glutamate(out) = N-acetyl-L-aspartyl-L-glutamate(in). Multifunctional anion transporter that operates via two distinct transport mechanisms, namely proton-coupled anion cotransport and membrane potential-dependent anion transport. Electroneutral proton-coupled acidic monosaccharide symporter, with a sugar to proton stoichiometry of 1:1. Exports glucuronic acid and free sialic acid derived from sialoglycoconjugate degradation out of lysosomes, driven by outwardly directed lysosomal pH gradient. May regulate lysosome function and metabolism of sialylated conjugates that impact oligodendrocyte lineage differentiation and myelinogenesis in the central nervous system. Electrogenic proton-coupled nitrate symporter that transports nitrate ions across the basolateral membrane of salivary gland acinar cells, with nitrate to proton stoichiometry of 2:1. May contribute to nitrate clearance from serum by salivary glands, where it is further concentrated and secreted in the saliva. Uses membrane potential to drive the uptake of acidic amino acids and peptides into synaptic vesicles. Responsible for synaptic vesicular storage of L-aspartate and L-glutamate in pinealocytes as well as vesicular uptake of N-acetyl-L-aspartyl-L-glutamate neuropeptide, relevant to aspartegic-associated glutamatergic neurotransmission and activation of metabotropic receptors that inhibit subsequent transmitter release. Functionally, receptor for CM101, a polysaccharide produced by group B Streptococcus with antipathoangiogenic properties. This Homo sapiens (Human) protein is Sialin (SLC17A5).